Consider the following 987-residue polypeptide: Kinesin-like protein KIN-14G (987 aa).

The region spanning 44–163 (SLRRYEAAGW…CILALKSYSE (120 aa)) is the Calponin-homology (CH) domain. The interval 201 to 221 (ISRTQSTDMLSTDQPLSSDGD) is disordered. The Kinesin motor domain occupies 394–721 (NIRVYCRVRP…LKFAERVGSV (328 aa)). 478–485 (GQTGSGKT) contacts ATP. Positions 725–754 (AARVNKDNSEVKELKEQIANLKMALVRKGN) form a coiled coil. 2 disordered regions span residues 759–849 (QPTA…ESKS) and 927–987 (NIQN…SLGT). Over residues 788–797 (MGNTSNNSRP) the composition is skewed to polar residues. Residues 840–849 (GKDEDRESKS) are compositionally biased toward basic and acidic residues. Polar residues predominate over residues 964–974 (PPNTVNSQPQR).

Belongs to the TRAFAC class myosin-kinesin ATPase superfamily. Kinesin family. KIN-14 subfamily. Monomer. Flower specific.

The protein resides in the cytoplasm. The protein localises to the cytoskeleton. Its function is as follows. Microtubule-binding motor protein. The chain is Kinesin-like protein KIN-14G from Arabidopsis thaliana (Mouse-ear cress).